We begin with the raw amino-acid sequence, 253 residues long: Tyrosine recombinase XerD-like (253 aa).

The Core-binding (CB) domain maps to 8–81; that stretch reads KQLTTQITNF…AVNQFLLYLY (74 aa). The 161-residue stretch at 93–253 folds into the Tyr recombinase domain; that stretch reads SETAPLPSQQ…PVTLEKYYKT (161 aa). Active-site residues include K157 and R218. Catalysis depends on Y250, which acts as the O-(3'-phospho-DNA)-tyrosine intermediate.

The protein belongs to the 'phage' integrase family. XerD-like subfamily.

It localises to the cytoplasm. In terms of biological role, putative tyrosine recombinase. Not involved in the cutting and rejoining of the recombining DNA molecules on dif(SL) site. In Streptococcus thermophilus (strain CNRZ 1066), this protein is Tyrosine recombinase XerD-like.